The primary structure comprises 48 residues: Large ribosomal subunit protein eL40 (48 aa).

It belongs to the eukaryotic ribosomal protein eL40 family.

This chain is Large ribosomal subunit protein eL40, found in Methanoregula boonei (strain DSM 21154 / JCM 14090 / 6A8).